The primary structure comprises 59 residues: Potassium channel toxin alpha-KTx 16.4 (59 aa).

The first 22 residues, 1–22, serve as a signal peptide directing secretion; sequence MKILSIVLIALIICSISICTEA. 3 disulfides stabilise this stretch: Cys30-Cys51, Cys36-Cys56, and Cys40-Cys58.

Belongs to the short scorpion toxin superfamily. Potassium channel inhibitor family. Alpha-KTx 16 subfamily. Expressed by the venom gland.

It is found in the secreted. Its function is as follows. Weak inhibitor of voltage-gated potassium channel hKv1.3/KCNA3. In Mesobuthus eupeus (Lesser Asian scorpion), this protein is Potassium channel toxin alpha-KTx 16.4.